The primary structure comprises 667 residues: Protein angel homolog 1 (667 aa).

Phosphoserine is present on residues Ser-77 and Ser-105.

The protein belongs to the CCR4/nocturin family.

This chain is Protein angel homolog 1, found in Rattus norvegicus (Rat).